The following is a 258-amino-acid chain: tRNA pseudouridine synthase A (258 aa).

Catalysis depends on Asp-52, which acts as the Nucleophile. Tyr-110 serves as a coordination point for substrate.

The protein belongs to the tRNA pseudouridine synthase TruA family. Homodimer.

It catalyses the reaction uridine(38/39/40) in tRNA = pseudouridine(38/39/40) in tRNA. In terms of biological role, formation of pseudouridine at positions 38, 39 and 40 in the anticodon stem and loop of transfer RNAs. The polypeptide is tRNA pseudouridine synthase A (Francisella tularensis subsp. mediasiatica (strain FSC147)).